The sequence spans 220 residues: Adenylate kinase (220 aa).

Residue 10–15 (GSGKST) participates in ATP binding. An NMP region spans residues 30–59 (ASGDIIRAEIKARTPLGIEMERYLSRGDLI). AMP contacts are provided by residues R36, 57–59 (DLI), 83–86 (GYPR), and Q90. The tract at residues 124-161 (GRRICSKCGAVYHVEFNPPKVPGKCDICGGELIQRPDD) is LID. ATP is bound at residue R125. Positions 128 and 131 each coordinate Zn(2+). 134-135 (VY) lines the ATP pocket. C148 and C151 together coordinate Zn(2+). R158 and R169 together coordinate AMP. G197 provides a ligand contact to ATP.

This sequence belongs to the adenylate kinase family. Monomer.

The protein resides in the cytoplasm. The enzyme catalyses AMP + ATP = 2 ADP. It functions in the pathway purine metabolism; AMP biosynthesis via salvage pathway; AMP from ADP: step 1/1. In terms of biological role, catalyzes the reversible transfer of the terminal phosphate group between ATP and AMP. Plays an important role in cellular energy homeostasis and in adenine nucleotide metabolism. The protein is Adenylate kinase of Pyrococcus abyssi (strain GE5 / Orsay).